A 629-amino-acid polypeptide reads, in one-letter code: tRNA uridine 5-carboxymethylaminomethyl modification enzyme MnmG (629 aa).

Residues 13–18, Val-125, and Ser-180 each bind FAD; that span reads GGGHAG. Residue 273 to 287 coordinates NAD(+); sequence GPRYCPSIEDKVMRF. Gln-370 contributes to the FAD binding site.

Belongs to the MnmG family. Homodimer. Heterotetramer of two MnmE and two MnmG subunits. FAD is required as a cofactor.

The protein resides in the cytoplasm. Its function is as follows. NAD-binding protein involved in the addition of a carboxymethylaminomethyl (cmnm) group at the wobble position (U34) of certain tRNAs, forming tRNA-cmnm(5)s(2)U34. In Salmonella paratyphi A (strain ATCC 9150 / SARB42), this protein is tRNA uridine 5-carboxymethylaminomethyl modification enzyme MnmG.